Consider the following 395-residue polypeptide: MTSILTNNSAMAALSTLRSISSSMEDTQSRISSGLRVGSASDNAAYWSIATTMRSDNQALSAVQDALGLGAAKVDTAYSGMESAIEVVKEIKAKLVAATEDGVDKAKIQEEITQLKDQLTSIADAASFSGENWLQADLSGGAVTKSVVGSFVRDGSGSVAVKKVDYSLNANSVLFDTVGDTGILDKVYNVSQASVTLTVNTNGVESQHTVAAYSLESLTEAGAEFQGNYALQGGNSYVKVENVWVRAETAATGATGQEIAATTTAAGTITADSWVVDVGNAPAANVSAGQSVANINIVGMGAAALDALISGVDAALTDMTSAAASLGSISSRIDLQSEFVNKLSDSIESGVGRLVDADMNEESTRLKALQTQQQLAIQALSIANSDSQNVLSLFR.

It belongs to the bacterial flagellin family.

It is found in the secreted. The protein localises to the bacterial flagellum. In terms of biological role, flagellin is the subunit protein which polymerizes to form the filaments of bacterial flagella. Homomer of FlaA is able to form a functional filament. This Rhizobium meliloti (Ensifer meliloti) protein is Flagellin A (flaA).